We begin with the raw amino-acid sequence, 279 residues long: Large ribosomal subunit protein uL2 (279 aa).

The interval threonine 223–lysine 279 is disordered. Over residues tryptophan 254 to lysine 267 the composition is skewed to basic residues.

It belongs to the universal ribosomal protein uL2 family. In terms of assembly, part of the 50S ribosomal subunit. Forms a bridge to the 30S subunit in the 70S ribosome.

One of the primary rRNA binding proteins. Required for association of the 30S and 50S subunits to form the 70S ribosome, for tRNA binding and peptide bond formation. It has been suggested to have peptidyltransferase activity; this is somewhat controversial. Makes several contacts with the 16S rRNA in the 70S ribosome. The sequence is that of Large ribosomal subunit protein uL2 from Ureaplasma urealyticum serovar 10 (strain ATCC 33699 / Western).